The chain runs to 241 residues: uncharacterized protein (241 aa).

In terms of domain architecture, HTH cro/C1-type spans 32-86; sequence LKKWRNLFNIQQIELAKYLNVSPSVISDYEVGRRKNPGVNIIKKYVLALIEIDKE. The segment at residues 43–62 is a DNA-binding region (H-T-H motif); that stretch reads QIELAKYLNVSPSVISDYEV.

This is an uncharacterized protein from Methanocaldococcus jannaschii (strain ATCC 43067 / DSM 2661 / JAL-1 / JCM 10045 / NBRC 100440) (Methanococcus jannaschii).